The chain runs to 515 residues: MGSGQWHVEKRSTFRNDSFVREYGIVPETGCLSIIVLGASGDLAKKKTFPALFNLYRQGFLNPDEVHIFGYARTKISDEELRDRIRGYLVDEKNAEQAEALSKFLQLIKYVSGPYDAEEGFQRLDKAISEHEISKNSTEGSSRRLFYLALPPSVYPSVCKMIKTCCMNKSDLGGWTRIVVEKPFGKDLESAEQLSSQIGELFDESQIYRIDHYLGKELVQNMLVLRFANRFFLPLWNRDNIENVQIVFREDFGTEGRGGYFDEYGIIRDIIQNHLLQVLCLVAMEKPISLKPEHIRDEKVKVLQSVVPISDDEVVLGQYEGYRDDDTVPNDSNTPTFATTILRIHNERWEGVPFILKAGKALNSRKAEIRIQFKDVPGDIFRCQKQGRNEFVIRLQPSEAMYMKLTVKQPGLDMNTVQSELDLSYGQRYQGVAIPEAYERLILDTIKGDQQHFVRRDELKVAWEIFTPLLHRIDKGEVKSIPYKPGSRGPKEADQLLEKAGYLQTHGYIWIPPTL.

NADP(+)-binding positions include 38–45, R73, Y155, and K182; that span reads GASGDLAK. Residues K182, 212–216, E250, and D269 contribute to the D-glucose 6-phosphate site; that span reads HYLGK. Catalysis depends on H274, which acts as the Proton acceptor. K357 contributes to the NADP(+) binding site. Residues K360 and R365 each coordinate D-glucose 6-phosphate. NADP(+)-binding residues include K366, R370, and R394. Q396 serves as a coordination point for D-glucose 6-phosphate. NADP(+) is bound by residues 402-404, 422-424, R488, and W510; these read YMK and DLS.

It belongs to the glucose-6-phosphate dehydrogenase family. In terms of assembly, forms homodimer. Expressed in roots, leaves, stems, buds, flowers and siliques.

Its subcellular location is the cytoplasm. The protein resides in the cytosol. It carries out the reaction D-glucose 6-phosphate + NADP(+) = 6-phospho-D-glucono-1,5-lactone + NADPH + H(+). It participates in carbohydrate degradation; pentose phosphate pathway; D-ribulose 5-phosphate from D-glucose 6-phosphate (oxidative stage): step 1/3. With respect to regulation, regulated by metabolites. Catalyzes the rate-limiting step of the oxidative pentose-phosphate pathway, which represents a route for the dissimilation of carbohydrates besides glycolysis. The main function of this enzyme is to provide reducing power (NADPH) and pentose phosphates for fatty acid and nucleic acid synthesis which are involved in membrane synthesis and cell division. The chain is Glucose-6-phosphate 1-dehydrogenase 6, cytoplasmic from Arabidopsis thaliana (Mouse-ear cress).